Reading from the N-terminus, the 399-residue chain is MTKTTLSSDPWSIKKPTALLVLADGTVIEGEGIGAIGIVEAEVCFNTAITGYEEILTDPSYTGQIINFTFPHIGNVGTNSEDIEDLTPLHHYGAVGAIFKAHSSPSNYRANENLNQWLKKHQIIALCGIDTRALTALIREKGAQNAVIAHDPNGNFDINALKERAQKWSGLLNLDLAKEVTSKQSIEWNEKPWIWNKGYTINNEYNFHIVAIDYGIKRNILRLMAAQGARITVVPAHTSVQEILAMKPDGIFLSNGPGDPNATAEYAVPMIKTFIECNIPLFGICLGHQLLALAVGAKTIKMHQGHHGANHPVKNLITEKVEITSMNHGFTVDSTSLPQYVEETHISLFDSTNCGIQIIGKPAFSVQYHPEASPGPQDSHYLFQRFHDLIVNYREQSNK.

The segment at 1–204 is CPSase; sequence MTKTTLSSDP…WNKGYTINNE (204 aa). L-glutamine contacts are provided by Ser-60, Gly-256, and Gly-258. The region spanning 208-396 is the Glutamine amidotransferase type-1 domain; it reads HIVAIDYGIK…HDLIVNYREQ (189 aa). The active-site Nucleophile is the Cys-285. Leu-286, Gln-289, Asn-327, Gly-329, and Phe-330 together coordinate L-glutamine. Active-site residues include His-369 and Glu-371.

The protein belongs to the CarA family. As to quaternary structure, composed of two chains; the small (or glutamine) chain promotes the hydrolysis of glutamine to ammonia, which is used by the large (or ammonia) chain to synthesize carbamoyl phosphate. Tetramer of heterodimers (alpha,beta)4.

It catalyses the reaction hydrogencarbonate + L-glutamine + 2 ATP + H2O = carbamoyl phosphate + L-glutamate + 2 ADP + phosphate + 2 H(+). It carries out the reaction L-glutamine + H2O = L-glutamate + NH4(+). Its pathway is amino-acid biosynthesis; L-arginine biosynthesis; carbamoyl phosphate from bicarbonate: step 1/1. The protein operates within pyrimidine metabolism; UMP biosynthesis via de novo pathway; (S)-dihydroorotate from bicarbonate: step 1/3. In terms of biological role, small subunit of the glutamine-dependent carbamoyl phosphate synthetase (CPSase). CPSase catalyzes the formation of carbamoyl phosphate from the ammonia moiety of glutamine, carbonate, and phosphate donated by ATP, constituting the first step of 2 biosynthetic pathways, one leading to arginine and/or urea and the other to pyrimidine nucleotides. The small subunit (glutamine amidotransferase) binds and cleaves glutamine to supply the large subunit with the substrate ammonia. This is Carbamoyl phosphate synthase small chain from Bartonella bacilliformis (strain ATCC 35685 / KC583 / Herrer 020/F12,63).